The primary structure comprises 363 residues: Mitochondrial RNA-splicing protein MRS1 (363 aa).

The protein resides in the mitochondrion. Function in mitochondrial RNA splicing in the excision of mitochondrial group I introns aI1 and aI5 beta from COX1 and bI3 from COB transcripts and thus would be involved in obtaining the correct structure of the intron, to allow the RNA catalyzed reactions to occur. The chain is Mitochondrial RNA-splicing protein MRS1 (MRS1) from Saccharomyces paradoxus (Yeast).